The primary structure comprises 122 residues: Large ribosomal subunit protein uL14 (122 aa).

The protein belongs to the universal ribosomal protein uL14 family. Part of the 50S ribosomal subunit. Forms a cluster with proteins L3 and L19. In the 70S ribosome, L14 and L19 interact and together make contacts with the 16S rRNA in bridges B5 and B8.

Functionally, binds to 23S rRNA. Forms part of two intersubunit bridges in the 70S ribosome. The polypeptide is Large ribosomal subunit protein uL14 (Corynebacterium efficiens (strain DSM 44549 / YS-314 / AJ 12310 / JCM 11189 / NBRC 100395)).